Here is a 235-residue protein sequence, read N- to C-terminus: Transcriptional regulatory protein MalR (235 aa).

Residues 3–119 (NVLIVEDDPM…RFQTALSDYR (117 aa)) enclose the Response regulatory domain. Aspartate 54 carries the 4-aspartylphosphate modification. The segment at residues 178–197 (TEDLAKHTEISQVSIRKYLK) is a DNA-binding region (H-T-H motif).

In terms of processing, phosphorylated and activated by MalK.

It localises to the cytoplasm. Its function is as follows. Member of a two-component regulatory system MalK/MalR. Activates transcription of maeA, maeN and yflS in presence of malate by binding to their promoter region. This is Transcriptional regulatory protein MalR (malR) from Bacillus subtilis (strain 168).